A 530-amino-acid chain; its full sequence is Glutamate--tRNA ligase (530 aa).

The 'HIGH' region motif lies at Pro26–Thr36. Residues Lys267–Arg271 carry the 'KMSKS' region motif. Lys270 contacts ATP.

This sequence belongs to the class-I aminoacyl-tRNA synthetase family. Glutamate--tRNA ligase type 1 subfamily. In terms of assembly, monomer.

It localises to the cytoplasm. The catalysed reaction is tRNA(Glu) + L-glutamate + ATP = L-glutamyl-tRNA(Glu) + AMP + diphosphate. In terms of biological role, catalyzes the attachment of glutamate to tRNA(Glu) in a two-step reaction: glutamate is first activated by ATP to form Glu-AMP and then transferred to the acceptor end of tRNA(Glu). This chain is Glutamate--tRNA ligase, found in Gloeobacter violaceus (strain ATCC 29082 / PCC 7421).